The primary structure comprises 497 residues: Histone-lysine N-methyltransferase ASHR3 (497 aa).

A PHD-type zinc finger spans residues 118-186; that stretch reads MVDCLVCHKP…QWRCVKCPMA (69 aa). In terms of domain architecture, AWS spans 283–326; sequence DGVGCTNCGPNCDRSCVCRVQCISCSKGCSCPESCGNRPFRKEK. The SET domain maps to 326–443; sequence KKIKIVKTEH…AGEPLTYDYR (118 aa). The region spanning 449–465 is the Post-SET domain; that stretch reads PEVKCNCGSENCQGYLG.

This sequence belongs to the class V-like SAM-binding methyltransferase superfamily. Histone-lysine methyltransferase family. SET2 subfamily. In terms of assembly, interacts with AMS/bHLH21 by its SET domain and PHD finger. As to expression, expressed in roots, flowers and buds, the anther and in stamen filaments.

The protein resides in the nucleus. The protein localises to the chromosome. It carries out the reaction L-lysyl-[histone] + S-adenosyl-L-methionine = N(6)-methyl-L-lysyl-[histone] + S-adenosyl-L-homocysteine + H(+). Histone methyltransferase. Involved in stamen development. This chain is Histone-lysine N-methyltransferase ASHR3 (ASHR3), found in Arabidopsis thaliana (Mouse-ear cress).